Reading from the N-terminus, the 150-residue chain is D-galactose-binding lectin (150 aa).

D-galactose is bound by residues His-16 and Gly-19. Residue Asn-26 is glycosylated (N-linked (GlcNAc...) asparagine). D-galactose-binding positions include 35 to 37 (DIH), His-64, and Gly-67. Asn-74 carries an N-linked (GlcNAc...) asparagine glycan. D-galactose is bound by residues 83 to 85 (DRH), His-108, and Gly-111. Asn-118 carries N-linked (GlcNAc...) asparagine glycosylation. 127–129 (DEH) lines the D-galactose pocket.

Oligomerizes in solution. The N-terminus is blocked. As to expression, expressed in mantle. Expressed 51 and 1.6 fold in mantle and gonads, respectively, relative to that in hemocytes. Expressed at a much lower level in other tissues tested including gill, muscle and hepatopancreas.

With respect to regulation, hemagglutinating activity does not require Ca(2+) ions. Hemagglutinating activity is inhibited by porcine stomach mucin (PSM), bovine submaxillary mucin (BSM) and fetuin. Agglutination of V.proteolyticus bacteria is inhibited by D-galactose, but not by D-glucose. Fungal binding is inhibited by D-galactose, but not by pathogen-associated molecular patterns (PAMPs) including lipopolysaccharide (LPS), peptidoglycan and beta-glucan. Functionally, D-galactose-binding lectin. Binds both alpha and beta anomer of galactose (Gal). Binds strongly to branched beta-Gal-terminated glycans and weakly to unbranched glycans with alpha-Gal on the end of chains. Has strong affinity for both Gal and GalNAc. Binds glycoproteins containing mucin-type chains. Has hemagglutinating activity towards human group A erythrocytes. Has hemagglutinating activity towards rabbit erythrocytes. Agglutinates V.proteolyticus bacteria. Binds strongly to fungi including species from genera Aspergillus, Alternaria, Fusarium and Haematonectria, and to a lesser extent to fungi from genera Trichoderma. Decreases conidia germination and hyphal growth of fungi. At high concentration, stimulates secretion of cytokines TNF-alpha and IFN-gamma from human peripheral blood cells, and at low concentration reduces hyperexpression of cytokine IL-10 in these cells, indicative of immunomodulatory capability. However, has no effect on IL-4 production. Recognizes pathogen-associated molecular patterns (PAMPs) and binds to peptidoglycan from S.aureus, but has only little binding to beta-1,3-glucan from E.gracilis and lipopolysaccharide (LPS) from E.coli. May be involved in innate immunity acting as an antibacterial or antifungal agent recognizing carbohydrate ligands on the surface of pathogens. This Mytilus trossulus (Blue mussel) protein is D-galactose-binding lectin.